A 203-amino-acid chain; its full sequence is Adenylyl-sulfate kinase (203 aa).

35–42 (GLSGSGKS) provides a ligand contact to ATP. Residue serine 109 is the Phosphoserine intermediate of the active site.

The protein belongs to the APS kinase family.

The enzyme catalyses adenosine 5'-phosphosulfate + ATP = 3'-phosphoadenylyl sulfate + ADP + H(+). Its pathway is sulfur metabolism; hydrogen sulfide biosynthesis; sulfite from sulfate: step 2/3. In terms of biological role, catalyzes the synthesis of activated sulfate. In Geotalea daltonii (strain DSM 22248 / JCM 15807 / FRC-32) (Geobacter daltonii), this protein is Adenylyl-sulfate kinase.